Consider the following 108-residue polypeptide: Pyrimidine/purine nucleoside phosphorylase (108 aa).

The protein belongs to the nucleoside phosphorylase PpnP family.

It carries out the reaction a purine D-ribonucleoside + phosphate = a purine nucleobase + alpha-D-ribose 1-phosphate. The catalysed reaction is adenosine + phosphate = alpha-D-ribose 1-phosphate + adenine. It catalyses the reaction cytidine + phosphate = cytosine + alpha-D-ribose 1-phosphate. The enzyme catalyses guanosine + phosphate = alpha-D-ribose 1-phosphate + guanine. It carries out the reaction inosine + phosphate = alpha-D-ribose 1-phosphate + hypoxanthine. The catalysed reaction is thymidine + phosphate = 2-deoxy-alpha-D-ribose 1-phosphate + thymine. It catalyses the reaction uridine + phosphate = alpha-D-ribose 1-phosphate + uracil. The enzyme catalyses xanthosine + phosphate = alpha-D-ribose 1-phosphate + xanthine. In terms of biological role, catalyzes the phosphorolysis of diverse nucleosides, yielding D-ribose 1-phosphate and the respective free bases. Can use uridine, adenosine, guanosine, cytidine, thymidine, inosine and xanthosine as substrates. Also catalyzes the reverse reactions. This Acinetobacter baumannii (strain AB307-0294) protein is Pyrimidine/purine nucleoside phosphorylase.